The primary structure comprises 196 residues: Pyridoxal 5'-phosphate synthase subunit PdxT (196 aa).

Position 47 to 49 (47 to 49 (GES)) interacts with L-glutamine. The Nucleophile role is filled by C79. L-glutamine contacts are provided by residues R106 and 134–135 (IR). Residues H170 and E172 each act as charge relay system in the active site.

Belongs to the glutaminase PdxT/SNO family. In terms of assembly, in the presence of PdxS, forms a dodecamer of heterodimers. Only shows activity in the heterodimer.

It carries out the reaction aldehydo-D-ribose 5-phosphate + D-glyceraldehyde 3-phosphate + L-glutamine = pyridoxal 5'-phosphate + L-glutamate + phosphate + 3 H2O + H(+). It catalyses the reaction L-glutamine + H2O = L-glutamate + NH4(+). Its pathway is cofactor biosynthesis; pyridoxal 5'-phosphate biosynthesis. Catalyzes the hydrolysis of glutamine to glutamate and ammonia as part of the biosynthesis of pyridoxal 5'-phosphate. The resulting ammonia molecule is channeled to the active site of PdxS. The sequence is that of Pyridoxal 5'-phosphate synthase subunit PdxT from Bacillus subtilis (strain 168).